The following is a 174-amino-acid chain: ATP-dependent protease subunit HslV (174 aa).

Residue Thr-2 is part of the active site. Na(+)-binding residues include Gly-157, Cys-160, and Thr-163.

The protein belongs to the peptidase T1B family. HslV subfamily. In terms of assembly, a double ring-shaped homohexamer of HslV is capped on each side by a ring-shaped HslU homohexamer. The assembly of the HslU/HslV complex is dependent on binding of ATP.

The protein localises to the cytoplasm. It catalyses the reaction ATP-dependent cleavage of peptide bonds with broad specificity.. Allosterically activated by HslU binding. Its function is as follows. Protease subunit of a proteasome-like degradation complex believed to be a general protein degrading machinery. This chain is ATP-dependent protease subunit HslV, found in Shewanella pealeana (strain ATCC 700345 / ANG-SQ1).